The sequence spans 76 residues: Acyl carrier protein (76 aa).

In terms of domain architecture, Carrier spans 1 to 74; it reads MFDKLKEIIA…DVVEYITEHT (74 aa). O-(pantetheine 4'-phosphoryl)serine is present on Ser-34.

It belongs to the acyl carrier protein (ACP) family. Post-translationally, 4'-phosphopantetheine is transferred from CoA to a specific serine of apo-ACP by AcpS. This modification is essential for activity because fatty acids are bound in thioester linkage to the sulfhydryl of the prosthetic group.

The protein localises to the cytoplasm. It functions in the pathway lipid metabolism; fatty acid biosynthesis. Its function is as follows. Carrier of the growing fatty acid chain in fatty acid biosynthesis. This chain is Acyl carrier protein, found in Clostridium perfringens (strain ATCC 13124 / DSM 756 / JCM 1290 / NCIMB 6125 / NCTC 8237 / Type A).